Reading from the N-terminus, the 330-residue chain is Phosphate acyltransferase (330 aa).

Belongs to the PlsX family. Homodimer. Probably interacts with PlsY.

Its subcellular location is the cytoplasm. It carries out the reaction a fatty acyl-[ACP] + phosphate = an acyl phosphate + holo-[ACP]. It functions in the pathway lipid metabolism; phospholipid metabolism. In terms of biological role, catalyzes the reversible formation of acyl-phosphate (acyl-PO(4)) from acyl-[acyl-carrier-protein] (acyl-ACP). This enzyme utilizes acyl-ACP as fatty acyl donor, but not acyl-CoA. The polypeptide is Phosphate acyltransferase (Carboxydothermus hydrogenoformans (strain ATCC BAA-161 / DSM 6008 / Z-2901)).